The sequence spans 461 residues: Cysteine--tRNA ligase (461 aa).

Position 28 (cysteine 28) interacts with Zn(2+). A 'HIGH' region motif is present at residues 30–40 (MTVYDYCHLGH). Residues cysteine 212, histidine 237, and glutamate 241 each contribute to the Zn(2+) site. A 'KMSKS' region motif is present at residues 269 to 273 (KMSKS). An ATP-binding site is contributed by lysine 272.

This sequence belongs to the class-I aminoacyl-tRNA synthetase family. In terms of assembly, monomer. Zn(2+) is required as a cofactor.

It is found in the cytoplasm. The enzyme catalyses tRNA(Cys) + L-cysteine + ATP = L-cysteinyl-tRNA(Cys) + AMP + diphosphate. The protein is Cysteine--tRNA ligase of Aromatoleum aromaticum (strain DSM 19018 / LMG 30748 / EbN1) (Azoarcus sp. (strain EbN1)).